The sequence spans 228 residues: Potassium/proton antiporter CemA (228 aa).

Helical transmembrane passes span 6–26 (FIPL…SFSF), 113–133 (IICF…LFIL), and 188–208 (IISG…KYWI).

It belongs to the CemA family.

It localises to the plastid. Its subcellular location is the chloroplast inner membrane. It carries out the reaction K(+)(in) + H(+)(out) = K(+)(out) + H(+)(in). Contributes to K(+)/H(+) antiport activity by supporting proton efflux to control proton extrusion and homeostasis in chloroplasts in a light-dependent manner to modulate photosynthesis. Prevents excessive induction of non-photochemical quenching (NPQ) under continuous-light conditions. Indirectly promotes efficient inorganic carbon uptake into chloroplasts. In Populus alba (White poplar), this protein is Potassium/proton antiporter CemA.